The following is a 278-amino-acid chain: Adenosylcobinamide-GDP ribazoletransferase (278 aa).

7 helical membrane-spanning segments follow: residues V35–L55, A62–L82, G116–I136, A141–C161, L185–I205, L222–I242, and L257–I277.

Belongs to the CobS family. Mg(2+) serves as cofactor.

It is found in the cell inner membrane. The catalysed reaction is alpha-ribazole + adenosylcob(III)inamide-GDP = adenosylcob(III)alamin + GMP + H(+). It catalyses the reaction alpha-ribazole 5'-phosphate + adenosylcob(III)inamide-GDP = adenosylcob(III)alamin 5'-phosphate + GMP + H(+). The protein operates within cofactor biosynthesis; adenosylcobalamin biosynthesis; adenosylcobalamin from cob(II)yrinate a,c-diamide: step 7/7. Its function is as follows. Joins adenosylcobinamide-GDP and alpha-ribazole to generate adenosylcobalamin (Ado-cobalamin). Also synthesizes adenosylcobalamin 5'-phosphate from adenosylcobinamide-GDP and alpha-ribazole 5'-phosphate. The protein is Adenosylcobinamide-GDP ribazoletransferase of Fusobacterium nucleatum subsp. nucleatum (strain ATCC 25586 / DSM 15643 / BCRC 10681 / CIP 101130 / JCM 8532 / KCTC 2640 / LMG 13131 / VPI 4355).